A 554-amino-acid polypeptide reads, in one-letter code: Trichloroethene reductive dehalogenase (554 aa).

Positions 1–42 form a signal peptide, tat-type signal; that stretch reads MSEKYHSTVTRRDFMKRLGLAGAGAGALGAAVLAENNLPHEF. 2 4Fe-4S ferredoxin-type domains span residues 425 to 457 and 471 to 500; these read PTKP…HEGP and EGWH…NNSW. [4Fe-4S] cluster is bound by residues C437, C440, C443, C447, C480, C483, C486, and C490.

This sequence belongs to the PceA family. The cofactor is [4Fe-4S] cluster. Corrinoid serves as cofactor. In terms of processing, predicted to be exported by the Tat system. The position of the signal peptide cleavage has been experimentally proven.

The protein localises to the cell membrane. The catalysed reaction is trichloroethene + AH2 = (Z)-1,2-dichloroethene + chloride + A + H(+). It carries out the reaction (Z)-1,2-dichloroethene + AH2 = chloroethene + chloride + A + H(+). It catalyses the reaction 1,1-dichloroethene + AH2 = chloroethene + chloride + A + H(+). Its activity is regulated as follows. Loses 93% of its activity upon incubation with 1-iodopropane and titanium(III) citrate in the dark. Subsequent exposure to light restores 80% of the original activity. Completely inhibited by 2 mM sodium sulfite or sodium dithionite, and by 1 mM cuprous chloride. Catalyzes the reductive dechlorination of trichloroethene (TCE) to cis-1,2-dichloroethene (DCE) and of cis-1,2-dichloroethene to chloroethene. The substrate specificity is broad, and the enzyme can dehalogenate various substrates, including 1,1-dichloroethene (1,1-DCE), 1,2-dichloroethane and 1,2-dibromoethane. A variety of other haloalkanes and haloalkenes containing three to five carbon atoms are dehalogenated at lower rates. Trans-1,2-dichloroethene (trans-DCE) and chloroethene are degraded at rates which are approximately 2 orders of magnitude lower. Titanium(III) citrate and methyl viologen can be used as reductants. This chain is Trichloroethene reductive dehalogenase, found in Dehalococcoides mccartyi (strain ATCC BAA-2266 / KCTC 15142 / 195) (Dehalococcoides ethenogenes (strain 195)).